The chain runs to 269 residues: Diaminopimelate epimerase (269 aa).

Substrate contacts are provided by Asn13, Gln47, and Asn65. Cys74 (proton donor) is an active-site residue. Substrate-binding positions include 75 to 76, Asn149, Asn182, and 200 to 201; these read GN and ER. The active-site Proton acceptor is the Cys209. 210–211 contributes to the substrate binding site; the sequence is GT.

Belongs to the diaminopimelate epimerase family. In terms of assembly, homodimer.

Its subcellular location is the cytoplasm. The catalysed reaction is (2S,6S)-2,6-diaminopimelate = meso-2,6-diaminopimelate. Its pathway is amino-acid biosynthesis; L-lysine biosynthesis via DAP pathway; DL-2,6-diaminopimelate from LL-2,6-diaminopimelate: step 1/1. Its function is as follows. Catalyzes the stereoinversion of LL-2,6-diaminopimelate (L,L-DAP) to meso-diaminopimelate (meso-DAP), a precursor of L-lysine and an essential component of the bacterial peptidoglycan. This Erythrobacter litoralis (strain HTCC2594) protein is Diaminopimelate epimerase.